A 680-amino-acid polypeptide reads, in one-letter code: Fermitin family homolog 2 (680 aa).

Positions His40 to Lys81 are interaction with membranes containing phosphatidylinositol phosphate. The segment at Leu141 to Glu162 is disordered. 4 positions are modified to phosphoserine: Ser159, Ser181, Ser339, and Ser351. The FERM domain occupies Met189–Lys661. A PH domain is found at Lys380–Lys476. Lys383 contacts a 1,2-diacyl-sn-glycero-3-phospho-(1D-myo-inositol-3,4,5-trisphosphate). Residue Ser666 is modified to Phosphoserine.

This sequence belongs to the kindlin family. Interacts with ITGB1; the interaction is inhibited in presence of ITGB1BP1. Interacts with FBLIM1. Interacts with active, unphosphorylated CTNNB1. Identified in a complex with CTNNB1 and TCF7L2/TCF4. Interacts with ILK, ITGB1 and ITGB3. As to expression, detected in adult heart muscle (at protein level). Detected in heart, skeletal muscle and testis.

The protein resides in the cytoplasm. It localises to the cell cortex. The protein localises to the cytoskeleton. It is found in the stress fiber. Its subcellular location is the cell junction. The protein resides in the focal adhesion. It localises to the membrane. The protein localises to the cell projection. It is found in the lamellipodium membrane. Its subcellular location is the nucleus. The protein resides in the myofibril. It localises to the sarcomere. The protein localises to the i band. It is found in the cell surface. Its function is as follows. Scaffolding protein that enhances integrin activation mediated by TLN1 and/or TLN2, but activates integrins only weakly by itself. Binds to membranes enriched in phosphoinositides. Enhances integrin-mediated cell adhesion onto the extracellular matrix and cell spreading; this requires both its ability to interact with integrins and with phospholipid membranes. Required for the assembly of focal adhesions. Participates in the connection between extracellular matrix adhesion sites and the actin cytoskeleton and also in the orchestration of actin assembly and cell shape modulation. Recruits FBLIM1 to focal adhesions. Plays a role in the TGFB1 and integrin signaling pathways. Stabilizes active CTNNB1 and plays a role in the regulation of transcription mediated by CTNNB1 and TCF7L2/TCF4 and in Wnt signaling. This Mus musculus (Mouse) protein is Fermitin family homolog 2 (Fermt2).